The primary structure comprises 395 residues: ATP phosphoribosyltransferase regulatory subunit (395 aa).

This sequence belongs to the class-II aminoacyl-tRNA synthetase family. HisZ subfamily. In terms of assembly, heteromultimer composed of HisG and HisZ subunits.

Its subcellular location is the cytoplasm. The protein operates within amino-acid biosynthesis; L-histidine biosynthesis; L-histidine from 5-phospho-alpha-D-ribose 1-diphosphate: step 1/9. Required for the first step of histidine biosynthesis. May allow the feedback regulation of ATP phosphoribosyltransferase activity by histidine. The chain is ATP phosphoribosyltransferase regulatory subunit from Azotobacter vinelandii (strain DJ / ATCC BAA-1303).